Consider the following 176-residue polypeptide: Ribosome rescue factor SmrB (176 aa).

Positions 98–173 (LDLHGLTQKQ…GTAALLLLIE (76 aa)) constitute a Smr domain.

The protein belongs to the SmrB family. In terms of assembly, associates with collided ribosomes, but not with correctly translating polysomes.

Its function is as follows. Acts as a ribosome collision sensor. Detects stalled/collided disomes (pairs of ribosomes where the leading ribosome is stalled and a second ribosome has collided with it) and endonucleolytically cleaves mRNA at the 5' boundary of the stalled ribosome. Stalled/collided disomes form a new interface (primarily via the 30S subunits) that binds SmrB. Cleaved mRNA becomes available for tmRNA ligation, leading to ribosomal subunit dissociation and rescue of stalled ribosomes. In Yersinia pseudotuberculosis serotype O:1b (strain IP 31758), this protein is Ribosome rescue factor SmrB.